The chain runs to 738 residues: Leucine-rich repeat flightless-interacting protein 1 (738 aa).

An N-acetylthreonine modification is found at Thr2. At Ser16 the chain carries Phosphoserine. Basic and acidic residues predominate over residues 40 to 65 (IRMKELERQQKEVEERPDKDFAEKGS). The segment at 40 to 98 (IRMKELERQQKEVEERPDKDFAEKGSRNMPSLSAATLASLGGTSSRRGSGDTSISMDTE) is disordered. A compositionally biased stretch (low complexity) spans 78–94 (SLGGTSSRRGSGDTSIS). Residues Ser83, Ser84, Ser88, and Ser92 each carry the phosphoserine modification. The stretch at 94 to 194 (SMDTEASIRE…LRQREEMLEK (101 aa)) forms a coiled coil. Lys249 participates in a covalent cross-link: Glycyl lysine isopeptide (Lys-Gly) (interchain with G-Cter in SUMO1). Basic and acidic residues-rich tracts occupy residues 253-262 (VEKVGQRETL) and 277-297 (DCVDRGVLHPGEKAENQRPVE). Residues 253 to 738 (VEKVGQRETL…SKSKEDCTMS (486 aa)) are disordered. Ser302 carries the post-translational modification Phosphoserine. The span at 314-326 (EVQSQDQENTSIL) shows a compositional bias: polar residues. Positions 330–347 (EQIESHEVTNKSDSRDSN) are enriched in basic and acidic residues. Ser346 and Ser348 each carry phosphoserine. Polar residues predominate over residues 371-380 (KNQSENSMDS). Basic and acidic residues-rich tracts occupy residues 381-400 (QGKENQEDLGKGSFEPRPDH) and 467-476 (SERELAHEAA). The tract at residues 479 to 580 (EEALTQSSQA…KNKKKKAAAP (102 aa)) is DNA-binding. 2 stretches are compositionally biased toward polar residues: residues 483 to 495 (TQSSQAGGENTVT) and 520 to 534 (TVQSGHQDTTGPGST). Residues 535–553 (DTKHTSPHAKERNKAKSEQ) are compositionally biased toward basic and acidic residues. Phosphoserine occurs at positions 551 and 560. Basic residues predominate over residues 563–577 (KKTKNKKKKNKKKKA). Residues 606 to 626 (RVQATDKKWAAETPELKEDPQ) are compositionally biased toward basic and acidic residues. Ser675 and Ser701 each carry phosphoserine. Basic and acidic residues-rich tracts occupy residues 691–703 (QADEKGIEGHSVD) and 720–738 (EQAREEVGNSKSKEDCTMS).

This sequence belongs to the LRRFIP family. In terms of assembly, homodimer. May also form higher oligomers. Interacts with FLII. Interacts with MYD88. Competes with FLII for MyD88-binding, even in the absence of LPS.

It localises to the nucleus. Its subcellular location is the cytoplasm. Its function is as follows. Transcriptional repressor which preferentially binds to the GC-rich consensus sequence (5'-AGCCCCCGGCG-3') and may regulate expression of TNF, EGFR and PDGFA. May control smooth muscle cells proliferation following artery injury through PDGFA repression. May also bind double-stranded RNA. Positively regulates Toll-like receptor (TLR) signaling in response to agonist probably by competing with the negative FLII regulator for MYD88-binding. The protein is Leucine-rich repeat flightless-interacting protein 1 (Lrrfip1) of Rattus norvegicus (Rat).